The primary structure comprises 140 residues: Gastrula zinc finger protein XlCGF49.1 (140 aa).

C2H2-type zinc fingers lie at residues 6–28 (FTCMECSKSFSQKSNLQTHYKIH), 34–56 (FTCMECGRTFSQKSTLLSHYKMH), 62–84 (FSCSECGKSFSHKNKLTLHQKIH), 90–112 (YACTECGKRFPEKSKLKIHWKIH), and 118–140 (FSCTECGKKFSRESNLYFHQKMH).

Belongs to the krueppel C2H2-type zinc-finger protein family.

The protein resides in the nucleus. Functionally, may be involved in transcriptional regulation. The sequence is that of Gastrula zinc finger protein XlCGF49.1 from Xenopus laevis (African clawed frog).